The chain runs to 277 residues: Proteasome subunit beta type-7 (277 aa).

Residues 1–43 (MAAVSVYERPVGGFSFDNCRRNAVLEADFAKKGYKLPTARKTG) constitute a propeptide, removed in mature form. Thr-44 acts as the Nucleophile in catalysis.

Belongs to the peptidase T1B family. The 26S proteasome consists of a 20S proteasome core and two 19S regulatory subunits. The 20S proteasome core is a barrel-shaped complex made of 28 subunits that are arranged in four stacked rings. The two outer rings are each formed by seven alpha subunits, and the two inner rings are formed by seven beta subunits. The proteolytic activity is exerted by three beta-subunits PSMB5, PSMB6 and PSMB7.

Its subcellular location is the cytoplasm. It localises to the nucleus. The catalysed reaction is Cleavage of peptide bonds with very broad specificity.. Functionally, component of the 20S core proteasome complex involved in the proteolytic degradation of most intracellular proteins. This complex plays numerous essential roles within the cell by associating with different regulatory particles. Associated with two 19S regulatory particles, forms the 26S proteasome and thus participates in the ATP-dependent degradation of ubiquitinated proteins. The 26S proteasome plays a key role in the maintenance of protein homeostasis by removing misfolded or damaged proteins that could impair cellular functions, and by removing proteins whose functions are no longer required. Associated with the PA200 or PA28, the 20S proteasome mediates ubiquitin-independent protein degradation. This type of proteolysis is required in several pathways including spermatogenesis (20S-PA200 complex) or generation of a subset of MHC class I-presented antigenic peptides (20S-PA28 complex). Within the 20S core complex, PSMB7 displays a trypsin-like activity. In Bos taurus (Bovine), this protein is Proteasome subunit beta type-7 (PSMB7).